The following is a 72-amino-acid chain: Translation initiation factor IF-1 (72 aa).

The 72-residue stretch at 1 to 72 (MAGNDVIEIE…TKGRITYRHK (72 aa)) folds into the S1-like domain.

The protein belongs to the IF-1 family. Component of the 30S ribosomal translation pre-initiation complex which assembles on the 30S ribosome in the order IF-2 and IF-3, IF-1 and N-formylmethionyl-tRNA(fMet); mRNA recruitment can occur at any time during PIC assembly.

It is found in the cytoplasm. In terms of biological role, one of the essential components for the initiation of protein synthesis. Stabilizes the binding of IF-2 and IF-3 on the 30S subunit to which N-formylmethionyl-tRNA(fMet) subsequently binds. Helps modulate mRNA selection, yielding the 30S pre-initiation complex (PIC). Upon addition of the 50S ribosomal subunit IF-1, IF-2 and IF-3 are released leaving the mature 70S translation initiation complex. In Oenococcus oeni (strain ATCC BAA-331 / PSU-1), this protein is Translation initiation factor IF-1.